The chain runs to 201 residues: Iron-sulfur flavoprotein AF_1896 (201 aa).

Residues C46, C49, C52, and C57 each contribute to the [4Fe-4S] cluster site.

It belongs to the SsuE family. Isf subfamily. As to quaternary structure, homodimer. FMN is required as a cofactor. Requires [4Fe-4S] cluster as cofactor.

In terms of biological role, redox-active protein probably involved in electron transport. This is Iron-sulfur flavoprotein AF_1896 from Archaeoglobus fulgidus (strain ATCC 49558 / DSM 4304 / JCM 9628 / NBRC 100126 / VC-16).